Here is a 171-residue protein sequence, read N- to C-terminus: Co-chaperone protein HscB homolog (171 aa).

Residues 3-75 (SHFALFDLEP…SQRARYLLSL (73 aa)) enclose the J domain.

Belongs to the HscB family. Interacts with HscA and stimulates its ATPase activity.

In terms of biological role, co-chaperone involved in the maturation of iron-sulfur cluster-containing proteins. Seems to help targeting proteins to be folded toward HscA. The chain is Co-chaperone protein HscB homolog from Azotobacter vinelandii.